A 433-amino-acid chain; its full sequence is Apolipoprotein L5 (433 aa).

The disordered stretch occupies residues 346 to 433 (HHRHLPQKAS…GRQAPGRHRQ (88 aa)). Positions 359–371 (SSSRGRAVRGSRV) are enriched in low complexity. A compositionally biased stretch (basic residues) spans 422-433 (RKGRQAPGRHRQ).

Belongs to the apolipoprotein L family. As to expression, low level of expression; detected in uterus, testis, skeletal muscle and stomach.

The protein localises to the cytoplasm. In terms of biological role, may affect the movement of lipids in the cytoplasm or allow the binding of lipids to organelles. The sequence is that of Apolipoprotein L5 (APOL5) from Homo sapiens (Human).